Here is a 30-residue protein sequence, read N- to C-terminus: M-poneritoxin-Nc3a (30 aa).

This sequence belongs to the ponericin-G family. In terms of tissue distribution, expressed by the venom gland.

The protein resides in the secreted. It localises to the target cell membrane. Its function is as follows. Membrane-perturbating peptide with multiple activities. It is insecticidal, since it induces contractile paralysis in insects (L.cuprina) during several hours and death after 24 hours. It shows a relatively strong and broad-spectrum antibacterial activity against both Gram-positive and Gram-negative bacteria (MIC&lt;20 uM). It is also antiparasitic, since it potently inhibits the larval development of the major pathogenic nematode of ruminants (H.contortus, IC(50)=5.6 uM) and reduces the motility of adult males of the other nematode B.malayi. It also shows cytotoxic activity against HEK293 cells (EC(50)=5-7 uM) but does not induce hemolysis in human erythrocytes. In addition, it causes a moderate increase in intracellular calcium concentration on neuronal and epithelial cell lines, which supports a non-specific membrane perturbation mechanism of action. In vivo, it induces pain by intraplantar injection into mice, suggesting a defensive function against vertebrate predators. In Neoponera commutata (Large hunting ant), this protein is M-poneritoxin-Nc3a.